We begin with the raw amino-acid sequence, 71 residues long: Lantibiotic Flvbeta.c (71 aa).

A propeptide spans 1-33 (cleaved by FlvT); that stretch reads MENKFDMEKFKKLAAVVSEDELDTLLDETTVGA. Residues 35 to 39 constitute a cross-link (lanthionine (Ser-Cys); by FlvM2); sequence SSNDC. Ser36 carries the post-translational modification 2,3-didehydroalanine (Ser); by FlvM2. 3 consecutive cross-links (beta-methyllanthionine (Thr-Cys); by FlvM2) follow at residues 54 to 60, 62 to 65, and 66 to 69; these read TSKFDWC, TGAC, and TTSC.

Post-translationally, contains LL-lanthionine and DL-beta-methyllanthionine, when coepressed in E.coli with the flavecin synthetase FlvM2.

Its subcellular location is the secreted. Functionally, lanthionine-containing peptide antibiotic (lantibiotic) that is probably active on Gram-positive bacteria, since its analog [Del1]Flvbeta.c shows antibacterial activity against M.luteus. This activity is not synergistically enhanced by [Del2]Flvalpha.a, an analog of Flvalpha.a, which is encoded by the same operon than Flvbeta.c. The bactericidal activity of lantibiotics is based on depolarization of energized bacterial cytoplasmic membranes, initiated by the formation of aqueous transmembrane pores. This Ruminococcus flavefaciens protein is Lantibiotic Flvbeta.c.